Consider the following 155-residue polypeptide: Ribosomal RNA large subunit methyltransferase H (155 aa).

S-adenosyl-L-methionine is bound by residues Leu-72, Gly-103, and 122 to 127 (LSPLTL).

It belongs to the RNA methyltransferase RlmH family. Homodimer.

It is found in the cytoplasm. It catalyses the reaction pseudouridine(1915) in 23S rRNA + S-adenosyl-L-methionine = N(3)-methylpseudouridine(1915) in 23S rRNA + S-adenosyl-L-homocysteine + H(+). Its function is as follows. Specifically methylates the pseudouridine at position 1915 (m3Psi1915) in 23S rRNA. The sequence is that of Ribosomal RNA large subunit methyltransferase H from Histophilus somni (strain 129Pt) (Haemophilus somnus).